The following is a 213-amino-acid chain: Orotate phosphoribosyltransferase (213 aa).

K26 serves as a coordination point for 5-phospho-alpha-D-ribose 1-diphosphate. Residue 34 to 35 coordinates orotate; that stretch reads FF. Residues 72–73, R99, K100, K103, H105, and 124–132 each bind 5-phospho-alpha-D-ribose 1-diphosphate; these read YK and DDVITAGTA. Residues T128 and R156 each coordinate orotate.

It belongs to the purine/pyrimidine phosphoribosyltransferase family. PyrE subfamily. Homodimer. Requires Mg(2+) as cofactor.

It carries out the reaction orotidine 5'-phosphate + diphosphate = orotate + 5-phospho-alpha-D-ribose 1-diphosphate. It functions in the pathway pyrimidine metabolism; UMP biosynthesis via de novo pathway; UMP from orotate: step 1/2. Functionally, catalyzes the transfer of a ribosyl phosphate group from 5-phosphoribose 1-diphosphate to orotate, leading to the formation of orotidine monophosphate (OMP). This Edwardsiella ictaluri (strain 93-146) protein is Orotate phosphoribosyltransferase.